The following is a 224-amino-acid chain: 7-cyano-7-deazaguanine synthase (224 aa).

An ATP-binding site is contributed by 10-20 (FSGGQDSTTCL). Zn(2+)-binding residues include C193, C201, C204, and C207.

It belongs to the QueC family. It depends on Zn(2+) as a cofactor.

The enzyme catalyses 7-carboxy-7-deazaguanine + NH4(+) + ATP = 7-cyano-7-deazaguanine + ADP + phosphate + H2O + H(+). The protein operates within purine metabolism; 7-cyano-7-deazaguanine biosynthesis. Catalyzes the ATP-dependent conversion of 7-carboxy-7-deazaguanine (CDG) to 7-cyano-7-deazaguanine (preQ(0)). This chain is 7-cyano-7-deazaguanine synthase, found in Neisseria gonorrhoeae (strain ATCC 700825 / FA 1090).